The following is a 147-amino-acid chain: MALRNIRKYGDSVLRKKCREVEKIDERLVTLIKDMLETMYDADGVGLAAPQVGILKRLFIVDIGDGPLVFINPEILDTDGKQVDEEGCLSLPGKTEPVMRPNYVKARALNEKGEEFEIEAEELLARAILHEYDHLNGTLFIDRTTKK.

2 residues coordinate Fe cation: cysteine 88 and histidine 130. Residue glutamate 131 is part of the active site. Histidine 134 contacts Fe cation.

The protein belongs to the polypeptide deformylase family. Fe(2+) is required as a cofactor.

The enzyme catalyses N-terminal N-formyl-L-methionyl-[peptide] + H2O = N-terminal L-methionyl-[peptide] + formate. Functionally, removes the formyl group from the N-terminal Met of newly synthesized proteins. Requires at least a dipeptide for an efficient rate of reaction. N-terminal L-methionine is a prerequisite for activity but the enzyme has broad specificity at other positions. This chain is Peptide deformylase, found in Clostridium botulinum (strain Alaska E43 / Type E3).